The following is a 94-amino-acid chain: Small ribosomal subunit protein bS18 (94 aa).

Belongs to the bacterial ribosomal protein bS18 family. In terms of assembly, part of the 30S ribosomal subunit. Forms a tight heterodimer with protein bS6.

Binds as a heterodimer with protein bS6 to the central domain of the 16S rRNA, where it helps stabilize the platform of the 30S subunit. This chain is Small ribosomal subunit protein bS18, found in Albidiferax ferrireducens (strain ATCC BAA-621 / DSM 15236 / T118) (Rhodoferax ferrireducens).